The chain runs to 292 residues: tRNA pseudouridine synthase B (292 aa).

D38 functions as the Nucleophile in the catalytic mechanism.

The protein belongs to the pseudouridine synthase TruB family. Type 1 subfamily.

It carries out the reaction uridine(55) in tRNA = pseudouridine(55) in tRNA. Its function is as follows. Responsible for synthesis of pseudouridine from uracil-55 in the psi GC loop of transfer RNAs. This Streptococcus gordonii (strain Challis / ATCC 35105 / BCRC 15272 / CH1 / DL1 / V288) protein is tRNA pseudouridine synthase B.